We begin with the raw amino-acid sequence, 300 residues long: tRNA dimethylallyltransferase 1 (300 aa).

10–17 provides a ligand contact to ATP; it reads GPTGVGKT. Residue 12–17 coordinates substrate; it reads TGVGKT. The tract at residues 35-38 is interaction with substrate tRNA; the sequence is DSRQ.

It belongs to the IPP transferase family. As to quaternary structure, monomer. It depends on Mg(2+) as a cofactor.

It catalyses the reaction adenosine(37) in tRNA + dimethylallyl diphosphate = N(6)-dimethylallyladenosine(37) in tRNA + diphosphate. Its function is as follows. Catalyzes the transfer of a dimethylallyl group onto the adenine at position 37 in tRNAs that read codons beginning with uridine, leading to the formation of N6-(dimethylallyl)adenosine (i(6)A). This Phocaeicola vulgatus (strain ATCC 8482 / DSM 1447 / JCM 5826 / CCUG 4940 / NBRC 14291 / NCTC 11154) (Bacteroides vulgatus) protein is tRNA dimethylallyltransferase 1.